Here is a 579-residue protein sequence, read N- to C-terminus: YTH domain-containing family protein 2 (579 aa).

A disordered region spans residues 1–45; the sequence is MSASSLLEQRPKGQGNKVQNGSVHQKDGLNDDDFEPYLSPQARPN. An N-acetylserine modification is found at Ser2. Residues Ser2, Ser4, Ser5, Ser22, Ser39, and Ser196 each carry the phosphoserine modification. Positions 2–384 are localization to mRNA processing bodies (P-bodies); it reads SASSLLEQRP…QAGSGSTPSE (383 aa). Residues 247–387 are disordered; the sequence is AKQQPKLKTK…SGSTPSEPHP (141 aa). Positions 291–316 are enriched in polar residues; it reads ALVQNIGQPTQGSPQHVGQQANNSPP. Low complexity predominate over residues 337 to 349; the sequence is AQLSVQQQAAQPT. Ser359 is subject to Phosphoserine. Positions 359-371 are enriched in gly residues; that stretch reads SGFGHNGVDGNGV. A compositionally biased stretch (polar residues) spans 372-383; the sequence is GQSQAGSGSTPS. Residues 385–579 form an interaction with m6A-containing mRNAs region; it reads PHPVLEKLRS…VKKERQGRGK (195 aa). At Ser394 the chain carries Phosphoserine. The 135-residue stretch at 410–544 folds into the YTH domain; sequence GRVFIIKSYS…EKAKQVLKII (135 aa). Residues 416 to 418, Asp422, 432 to 433, Asn462, Trp486, and Trp491 each bind RNA; these read KSY and WC.

This sequence belongs to the YTHDF family. YTHDF2 subfamily. In terms of assembly, interacts with CNOT1; interaction is direct and promotes recruitment of the CCR4-NOT complex. Interacts with YTHDF3. Interacts with RIDA/HRSP12; interaction leads to recruitment of the ribonuclease P/MRP complex. In terms of processing, ubiquitinated by the SCF(SKP2) complex, leading to its degradation.

It localises to the cytoplasm. Its subcellular location is the cytosol. It is found in the P-body. The protein localises to the stress granule. The protein resides in the nucleus. In terms of biological role, specifically recognizes and binds N6-methyladenosine (m6A)-containing RNAs, and regulates their stability. M6A is a modification present at internal sites of mRNAs and some non-coding RNAs and plays a role in mRNA stability and processing. Acts as a regulator of mRNA stability by promoting degradation of m6A-containing mRNAs via interaction with the CCR4-NOT and ribonuclease P/MRP complexes, depending on the context. The YTHDF paralogs (YTHDF1, YTHDF2 and YTHDF3) share m6A-containing mRNAs targets and act redundantly to mediate mRNA degradation and cellular differentiation. M6A-containing mRNAs containing a binding site for RIDA/HRSP12 (5'-GGUUC-3') are preferentially degraded by endoribonucleolytic cleavage: cooperative binding of RIDA/HRSP12 and YTHDF2 to transcripts leads to recruitment of the ribonuclease P/MRP complex. Other m6A-containing mRNAs undergo deadenylation via direct interaction between YTHDF2 and CNOT1, leading to recruitment of the CCR4-NOT and subsequent deadenylation of m6A-containing mRNAs. Required maternally to regulate oocyte maturation: probably acts by binding to m6A-containing mRNAs, thereby regulating maternal transcript dosage during oocyte maturation, which is essential for the competence of oocytes to sustain early zygotic development. Also required during spermatogenesis: regulates spermagonial adhesion by promoting degradation of m6A-containing transcripts coding for matrix metallopeptidases. Also involved in hematopoietic stem cells specification by binding to m6A-containing mRNAs, leading to promote their degradation. Also acts as a regulator of neural development by promoting m6A-dependent degradation of neural development-related mRNA targets. Inhibits neural specification of induced pluripotent stem cells by binding to methylated neural-specific mRNAs and promoting their degradation, thereby restraining neural differentiation. Regulates circadian regulation of hepatic lipid metabolism: acts by promoting m6A-dependent degradation of PPARA transcripts. Regulates the innate immune response to infection by inhibiting the type I interferon response: acts by binding to m6A-containing IFNB transcripts and promoting their degradation. May also act as a promoter of cap-independent mRNA translation following heat shock stress: upon stress, relocalizes to the nucleus and specifically binds mRNAs with some m6A methylation mark at their 5'-UTR, protecting demethylation of mRNAs by FTO, thereby promoting cap-independent mRNA translation. Regulates mitotic entry by promoting the phase-specific m6A-dependent degradation of WEE1 transcripts. Promotes formation of phase-separated membraneless compartments, such as P-bodies or stress granules, by undergoing liquid-liquid phase separation upon binding to mRNAs containing multiple m6A-modified residues: polymethylated mRNAs act as a multivalent scaffold for the binding of YTHDF proteins, juxtaposing their disordered regions and thereby leading to phase separation. The resulting mRNA-YTHDF complexes then partition into different endogenous phase-separated membraneless compartments, such as P-bodies, stress granules or neuronal RNA granules. May also recognize and bind RNAs modified by C5-methylcytosine (m5C) and act as a regulator of rRNA processing. In Macaca fascicularis (Crab-eating macaque), this protein is YTH domain-containing family protein 2.